A 122-amino-acid chain; its full sequence is Spermidine export protein MdtJ (122 aa).

The next 4 membrane-spanning stretches (helical) occupy residues 1 to 21, 31 to 51, 54 to 74, and 81 to 101; these read MIYWIFLGLAIATEIIGTLSM, TGHIVMYVMITASYVMLSMAV, VALGVAYALWEGIGILFITLF, and EPISALKVLGLVTLIVGIMLV.

The protein belongs to the drug/metabolite transporter (DMT) superfamily. Small multidrug resistance (SMR) (TC 2.A.7.1) family. MdtJ subfamily. In terms of assembly, forms a complex with MdtI.

It localises to the cell inner membrane. Functionally, catalyzes the excretion of spermidine. The sequence is that of Spermidine export protein MdtJ from Serratia proteamaculans (strain 568).